The following is a 201-amino-acid chain: 3-isopropylmalate dehydratase small subunit (201 aa).

It belongs to the LeuD family. LeuD type 1 subfamily. In terms of assembly, heterodimer of LeuC and LeuD.

It carries out the reaction (2R,3S)-3-isopropylmalate = (2S)-2-isopropylmalate. Its pathway is amino-acid biosynthesis; L-leucine biosynthesis; L-leucine from 3-methyl-2-oxobutanoate: step 2/4. In terms of biological role, catalyzes the isomerization between 2-isopropylmalate and 3-isopropylmalate, via the formation of 2-isopropylmaleate. This is 3-isopropylmalate dehydratase small subunit from Afipia carboxidovorans (strain ATCC 49405 / DSM 1227 / KCTC 32145 / OM5) (Oligotropha carboxidovorans).